Consider the following 767-residue polypeptide: Pyrin (767 aa).

One can recognise a Pyrin domain in the interval 1–92 (MAKTLGDHLL…AEELRKATGT (92 aa)). The segment at 94–219 (HLIEENRVGG…LQGLYNNAPG (126 aa)) is disordered. 3 stretches are compositionally biased toward polar residues: residues 126 to 142 (GTQQ…SSQA), 165 to 176 (LDSQTKPWTRST), and 183 to 208 (TQGT…SSAG). Ser241 carries the post-translational modification Phosphoserine. The tract at residues 311-346 (TSLIGEERCPTSWTENGNGSPETTESSGETAGSILS) is disordered. Residues 321 to 340 (TSWTENGNGSPETTESSGET) are compositionally biased toward polar residues. Residues 439–481 (QSLPQCPRHMKQVLLLFCEDHREPICLICRLSLEHQGHRVRPI) form a B box-type zinc finger. Residues Cys444, His447, Cys467, and His473 each contribute to the Zn(2+) site. Positions 481–510 (IEEAALEYKEQIREQLERLREMRGYVEEHR) form a coiled coil. Positions 489 to 647 (KEQIREQLER…CFSEMLSSEM (159 aa)) are required for homotrimerization and induction of pyroptosomes. The segment at 697 to 719 (GGSEPKDYLHPQPAQDTPELHEI) is disordered.

Homotrimer. Interacts (via the B box-type zinc finger) with PSTPIP1. Interacts (via the B30.2/SPRY domain) with several components of the inflammasome complex, including CASP1 p20 and p10 subunits, CASP5, PYCARD, NLRP1, NLRP2 and NLRP3, as well as with unprocessed IL1B; this interaction may lead to autophagic degradation of these proteins. Component of the AIM2 PANoptosome complex, a multiprotein complex that drives inflammatory cell death (PANoptosis). Interacts with NFKBIA and RELA. Interacts weakly with VASP and ACTR3. Interacts with active ULK1 (phosphorylated on 'Ser-317') and BECN1 simultaneously. Also interacts with ATG16L1 (via WD repeats), and with ATG8 family members, including GABARAP, GABARAPL1 and, to a lesser extent, GABARAPL2, MAP1LC3A/LC3A and MAP1LC3C/LC3C. Interacts with TRIM21. Interacts with YWHAB, YWHAE, YWHAG, YWHAH, YWHAQ and YWHAZ; the interaction is required for the down-regulation of pyrin pro-inflammatory activity. Post-translationally, phosphorylation at Ser-241 is required for the interaction with 14-3-3 proteins and down-regulation of pyrin pro-inflammatory activity. In terms of processing, degraded along with the delivery of its substrates to autolysosomal compartments (at protein level). As to expression, expressed in spleen peripheral blood granulocytes. Not expressed in lymphocytes, thymus, testis, ovary, heart, brain, lung, liver, kidney and muscle.

Its subcellular location is the cytoplasm. It localises to the cytoskeleton. The protein resides in the cell projection. It is found in the ruffle. The protein localises to the lamellipodium. Its subcellular location is the cytoplasmic vesicle. It localises to the autophagosome. The protein resides in the nucleus. Its function is as follows. Involved in the regulation of innate immunity and the inflammatory response in response to IFNG/IFN-gamma. Organizes autophagic machinery by serving as a platform for the assembly of ULK1, Beclin 1/BECN1, ATG16L1, and ATG8 family members and recognizes specific autophagy targets, thus coordinating target recognition with assembly of the autophagic apparatus and initiation of autophagy. Acts as an autophagy receptor for the degradation of several inflammasome components, including CASP1, NLRP1 and NLRP3, hence preventing excessive IL1B- and IL18-mediated inflammation. However, it can also have a positive effect in the inflammatory pathway, acting as an innate immune sensor that triggers PYCARD/ASC specks formation, caspase-1 activation, and IL1B and IL18 production. Together with AIM2, also acts as a mediator of pyroptosis, necroptosis and apoptosis (PANoptosis), an integral part of host defense against pathogens, in response to bacterial infection. It is required for PSTPIP1-induced PYCARD/ASC oligomerization and inflammasome formation. Recruits PSTPIP1 to inflammasomes, and is required for PSTPIP1 oligomerization. The sequence is that of Pyrin from Mus musculus (Mouse).